The following is a 1037-amino-acid chain: Serine/threonine-protein kinase ULK2 (1037 aa).

The Protein kinase domain maps to tyrosine 9 to leucine 271. ATP contacts are provided by residues valine 15–valine 23 and lysine 39. The active-site Proton acceptor is the aspartate 131. The interval glutamate 319–threonine 350 is disordered. Over residues serine 335–cysteine 348 the composition is skewed to low complexity. Serine 430 is modified (phosphoserine). Disordered stretches follow at residues cysteine 452–leucine 480, glycine 494–glutamine 515, glutamine 540–leucine 594, and histidine 626–arginine 697. Composition is skewed to polar residues over residues serine 506 to glutamine 515 and leucine 571 to asparagine 585. Basic and acidic residues predominate over residues glutamine 632 to serine 643. The segment covering glutamine 658 to glutamine 678 has biased composition (polar residues). Phosphoserine occurs at positions 772 and 781. The segment at glutamate 813 to valine 1037 is CTD-like region.

Belongs to the protein kinase superfamily. Ser/Thr protein kinase family. APG1/unc-51/ULK1 subfamily. In terms of assembly, component of a complex consisting of ATG13/KIAA0652, ULK1 and RB1CC1/FIP200. Interacts (via C-terminus) with ATG13/KIAA0652. Associates with the mammalian target of rapamycin complex 1 (mTORC1) through an interaction with RPTOR. Interacts with SYNGAP1. Post-translationally, autophosphorylated. In response to nutrient limitation, probably phosphorylated and activated by AMPK, leading to activate autophagy. Widely expressed.

The protein localises to the cytoplasmic vesicle membrane. The enzyme catalyses L-seryl-[protein] + ATP = O-phospho-L-seryl-[protein] + ADP + H(+). The catalysed reaction is L-threonyl-[protein] + ATP = O-phospho-L-threonyl-[protein] + ADP + H(+). In terms of biological role, serine/threonine-protein kinase involved in autophagy in response to starvation. Acts upstream of phosphatidylinositol 3-kinase PIK3C3 to regulate the formation of autophagophores, the precursors of autophagosomes. Part of regulatory feedback loops in autophagy: acts both as a downstream effector and a negative regulator of mammalian target of rapamycin complex 1 (mTORC1) via interaction with RPTOR. Activated via phosphorylation by AMPK, also acts as a negative regulator of AMPK through phosphorylation of the AMPK subunits PRKAA1, PRKAB2 and PRKAG1. May phosphorylate ATG13/KIAA0652, FRS2, FRS3 and RPTOR; however such data need additional evidences. Not involved in ammonia-induced autophagy or in autophagic response of cerebellar granule neurons (CGN) to low potassium concentration. Plays a role early in neuronal differentiation and is required for granule cell axon formation: may govern axon formation via Ras-like GTPase signaling and through regulation of the Rab5-mediated endocytic pathways within developing axons. The chain is Serine/threonine-protein kinase ULK2 (Ulk2) from Mus musculus (Mouse).